The chain runs to 311 residues: Homeobox-leucine zipper protein HOX1 (311 aa).

Disordered stretches follow at residues 29–69 (AGGA…SDHR) and 97–160 (AETT…KKLR). Positions 119–145 (SSPNSTLSSLSGKRGAPSAATAAAAAA) are enriched in low complexity. Residues 154-213 (GSRKKLRLSKDQAAVLEDTFKEHNTLNPKQKAALARQLNLKPRQVEVWFQNRRARTKLKQ) constitute a DNA-binding region (homeobox). Residues 212–256 (KQTEVDCELLKRCCETLTDENRRLHRELQELRALKLATAAAAPHH) form a leucine-zipper region. The interval 279 to 311 (SAATTTRNNSGAAPARPVPTRPWPPAAAQRSSA) is disordered. The span at 280 to 289 (AATTTRNNSG) shows a compositional bias: polar residues. Over residues 294–303 (RPVPTRPWPP) the composition is skewed to pro residues.

Belongs to the HD-ZIP homeobox family. Class II subfamily. In terms of assembly, homodimer. May form a heterodimer with HOX2, HOX3 or HOX7. Expressed in root provascular and vascular cylinder, provascular and vascular strands of leaves, provascular and vascular strands of the whole panicle, in mature embryo provascular bundles of scutellum and embryonic axis and provascular and vascular strands of young immature spikelet organs. Expressed in differentiating and differentiated xylem and phloem elements, and in outer and inner bundle sheath cells of all vascular bundles. Expressed in auricles, ligules, culm, guard cells brac hairs and pollen.

The protein localises to the nucleus. Probable transcription repressor involved leaf development. Binds to the DNA sequence 5'-CAAT[GC]ATTG-3'. May act as a regulatory switch to specify provascular cell fate. This is Homeobox-leucine zipper protein HOX1 (HOX1) from Oryza sativa subsp. japonica (Rice).